A 361-amino-acid polypeptide reads, in one-letter code: Very-long-chain 3-oxoacyl-CoA reductase (361 aa).

A helical membrane pass occupies residues 32-52 (PALILSTVGAAFLLRYTLSIF). NADP(+)-binding residues include valine 79, aspartate 133, asparagine 163, arginine 198, tyrosine 236, lysine 240, valine 269, and serine 271. Tyrosine 236 acts as the Proton donor in catalysis. The active-site Lowers pKa of active site Tyr is the lysine 240.

The protein belongs to the short-chain dehydrogenases/reductases (SDR) family.

It is found in the endoplasmic reticulum membrane. The catalysed reaction is a very-long-chain (3R)-3-hydroxyacyl-CoA + NADP(+) = a very-long-chain 3-oxoacyl-CoA + NADPH + H(+). Its pathway is lipid metabolism; fatty acid biosynthesis. Component of the microsomal membrane bound fatty acid elongation system, which produces the 26-carbon very long-chain fatty acids (VLCFA) from palmitate. Catalyzes the reduction of the 3-ketoacyl-CoA intermediate that is formed in each cycle of fatty acid elongation. VLCFAs serve as precursors for ceramide and sphingolipids. This chain is Very-long-chain 3-oxoacyl-CoA reductase, found in Cryptococcus neoformans var. neoformans serotype D (strain B-3501A) (Filobasidiella neoformans).